We begin with the raw amino-acid sequence, 181 residues long: dTDP-4-dehydrorhamnose 3,5-epimerase (181 aa).

Residues arginine 23, glutamate 28, 47–49, and arginine 59 contribute to the substrate site; that span reads QDN. Catalysis depends on histidine 62, which acts as the Proton acceptor. Residues lysine 72 and histidine 119 each contribute to the substrate site. The active-site Proton donor is the tyrosine 132. Substrate-binding residues include glutamate 143 and lysine 167.

The protein belongs to the dTDP-4-dehydrorhamnose 3,5-epimerase family. Homodimer.

It catalyses the reaction dTDP-4-dehydro-6-deoxy-alpha-D-glucose = dTDP-4-dehydro-beta-L-rhamnose. It participates in carbohydrate biosynthesis; dTDP-L-rhamnose biosynthesis. It functions in the pathway bacterial outer membrane biogenesis; LPS O-antigen biosynthesis. In terms of biological role, catalyzes the epimerization of the C3' and C5'positions of dTDP-6-deoxy-D-xylo-4-hexulose, forming dTDP-6-deoxy-L-lyxo-4-hexulose. This chain is dTDP-4-dehydrorhamnose 3,5-epimerase (rfbC), found in Shigella flexneri.